A 965-amino-acid polypeptide reads, in one-letter code: UvrABC system protein A (965 aa).

32 to 39 is an ATP binding site; that stretch reads GLSGSGKS. A C4-type zinc finger spans residues 254-281; sequence CPVCDYSLPELEPRLFSFNAPMGACPAC. ABC transporter domains are found at residues 311-588 and 608-937; these read WDRR…PRSL and PNAT…HFLA. 641–648 is a binding site for ATP; the sequence is GVSGSGKS. The C4-type zinc-finger motif lies at 740–766; sequence CEACEGDGLIKVEMHFLPDVYVPCDVC.

The protein belongs to the ABC transporter superfamily. UvrA family. As to quaternary structure, forms a heterotetramer with UvrB during the search for lesions.

The protein resides in the cytoplasm. Its function is as follows. The UvrABC repair system catalyzes the recognition and processing of DNA lesions. UvrA is an ATPase and a DNA-binding protein. A damage recognition complex composed of 2 UvrA and 2 UvrB subunits scans DNA for abnormalities. When the presence of a lesion has been verified by UvrB, the UvrA molecules dissociate. The sequence is that of UvrABC system protein A from Xylella fastidiosa (strain 9a5c).